A 92-amino-acid chain; its full sequence is CRISPR-associated endoribonuclease Cas2 2 (92 aa).

D12 is a Mg(2+) binding site.

It belongs to the CRISPR-associated endoribonuclease Cas2 protein family. As to quaternary structure, homodimer, forms a heterotetramer with a Cas1 homodimer. Mg(2+) is required as a cofactor.

Functionally, CRISPR (clustered regularly interspaced short palindromic repeat), is an adaptive immune system that provides protection against mobile genetic elements (viruses, transposable elements and conjugative plasmids). CRISPR clusters contain sequences complementary to antecedent mobile elements and target invading nucleic acids. CRISPR clusters are transcribed and processed into CRISPR RNA (crRNA). Functions as a ssRNA-specific endoribonuclease. Involved in the integration of spacer DNA into the CRISPR cassette. The chain is CRISPR-associated endoribonuclease Cas2 2 (cas22) from Archaeoglobus fulgidus (strain ATCC 49558 / DSM 4304 / JCM 9628 / NBRC 100126 / VC-16).